We begin with the raw amino-acid sequence, 56 residues long: uncharacterized protein (56 aa).

A helical membrane pass occupies residues 12–32 (GITLFPYFAILILILAILVVG). A hydrophobic region spans residues 19–31 (FAILILILAILVV).

It localises to the membrane. This is an uncharacterized protein from Chenopodium amaranticolor (Quinoa).